Consider the following 114-residue polypeptide: Flagellar hook-basal body complex protein FliE (114 aa).

It belongs to the FliE family.

It is found in the bacterial flagellum basal body. This Burkholderia multivorans (strain ATCC 17616 / 249) protein is Flagellar hook-basal body complex protein FliE.